The chain runs to 556 residues: HIRA-interacting protein 3 (556 aa).

A Phosphoserine modification is found at Ser-27. Basic and acidic residues predominate over residues 64 to 77; that stretch reads DEAASREDKLDLTK. Residues 64–426 are disordered; that stretch reads DEAASREDKL…GRRGEDHPAV (363 aa). Thr-84 is modified (phosphothreonine). 8 positions are modified to phosphoserine: Ser-87, Ser-98, Ser-100, Ser-125, Ser-142, Ser-143, Ser-159, and Ser-160. Low complexity predominate over residues 99–108; sequence ESESGSEASS. The span at 126–158 shows a compositional bias: basic and acidic residues; the sequence is PAKEENPRRASKAVEESSDEERQRDLPAQRGEE. Residues 168–177 are compositionally biased toward basic residues; sequence KGKTRKKPVV. Residues Ser-196, Ser-199, Ser-223, and Ser-227 each carry the phosphoserine modification. Over residues 209 to 224 the composition is skewed to basic and acidic residues; the sequence is KKVEGNKGTKSLKESE. Residues 240-254 show a composition bias toward acidic residues; sequence EEEVEEEEKEEDEEK. Basic residues predominate over residues 260–269; that stretch reads RTRSNGRRKS. 2 positions are modified to phosphoserine: Ser-289 and Ser-291. The segment covering 304 to 322 has biased composition (basic and acidic residues); sequence DSGRDREPPVQRKSEDRTQ. A phosphoserine mark is found at Ser-330, Ser-332, Ser-333, and Ser-357. Thr-358 carries the post-translational modification Phosphothreonine. Ser-359, Ser-363, Ser-370, and Ser-372 each carry phosphoserine. The span at 385 to 396 shows a compositional bias: basic residues; sequence RSSKKSSRKGRT. The interval 403-527 is interaction with the histone H2A-H2B complex; sequence SDGSPEAKGG…APPGELYRRT (125 aa). Thr-471 is modified (phosphothreonine). The disordered stretch occupies residues 502–556; it reads SGRPRRRTAWNPLGEAAPPGELYRRTLDSDEERPRPAPPDWSHMRGIISSDGESN. Basic and acidic residues predominate over residues 523-536; that stretch reads LYRRTLDSDEERPR. A phosphoserine mark is found at Ser-530, Ser-550, Ser-551, and Ser-555.

Interacts (via C-terminus) with histone H2A-H2B dimers; the interaction is direct. Interacts with HIRA. Interacts with CK2. Post-translationally, phosphorylated by CK2. In terms of tissue distribution, widely expressed. Isoform 1 is predominant in skeletal muscle. Isoform 2 is predominant in liver and heart.

The protein localises to the nucleus. Its function is as follows. Histone chaperone that carries a H2A-H2B histone complex and facilitates its deposition onto chromatin. In Homo sapiens (Human), this protein is HIRA-interacting protein 3 (HIRIP3).